Here is an 878-residue protein sequence, read N- to C-terminus: Enoyl-CoA isomerase/hydratase claC (878 aa).

The interval 541 to 561 is disordered; that stretch reads VGPASTEATSPVVEPSTMESD. Substrate-binding positions include 677–681 and glycine 724; that span reads AGADL.

This sequence belongs to the enoyl-CoA hydratase/isomerase family.

It participates in secondary metabolite biosynthesis. Functionally, enoyl-CoA isomerase/hydratase; part of the cla gene cluster that produces clavatol and ortho-quinone methide. The clavatol biosynthesis cluster cla and the terrestric acid cluster tra are both involved in the production of peniphenones and penilactones. The non-reducing PKS claF is responsible for the formation of clavatol from successive condensations of 3 malonyl-CoA units, presumably with a simple acetyl-CoA starter unit, and 2 methylation steps. The esterase claE probably collaborates with claF by catalyzing the hydrolysis of ACP-bound acyl intermediates to free the ACP from stalled intermediates. The clavatol oxidase claD then converts clavatol to hydroxyclavatol. Spontaneous dehydration of hydroxyclavatol leads to the accumulation of the highly active ortho-quinone methide. On the other hand, the PKS-NRPS hybrid traA is involved in the formation of crustosic acid, with the help of traB and traD. The polyketide synthase module (PKS) of traA is responsible for the synthesis of the polyketide backbone via the condensation of an acetyl-CoA starter unit with 3 malonyl-CoA units. The downstream nonribosomal peptide synthetase (NRPS) module then amidates the carboxyl end of the polyketide with L-malic acid. Because traA lacks a designated enoylreductase (ER) domain, the required activity is provided the enoyl reductase traG. Crustosic acid undergoes decarboxylation and isomerization to the terrestric acid, catalyzed by the 2-oxoglutarate-dependent dioxygenase traH. Both acids are further converted to the 2 gamma-butyrolactones (R)-5-methyltetronic acid and (S)-5-carboxylmethyltetronic acid, with involvement of the cytochrome P450 monooxygenase claJ. Spontaneous addition of the methide to these gamma-butyrolactones leads to peniphenone D and penilactone D, which undergo again stereospecific attacking by methide to give penilactones A and B. The function of the enoyl-CoA isomerase/hydratase claC has not been investigated yet. The sequence is that of Enoyl-CoA isomerase/hydratase claC from Penicillium crustosum (Blue mold fungus).